Reading from the N-terminus, the 341-residue chain is Heat-inducible transcription repressor HrcA (341 aa).

This sequence belongs to the HrcA family.

Functionally, negative regulator of class I heat shock genes (grpE-dnaK-dnaJ and groELS operons). Prevents heat-shock induction of these operons. This is Heat-inducible transcription repressor HrcA from Leptothrix cholodnii (strain ATCC 51168 / LMG 8142 / SP-6) (Leptothrix discophora (strain SP-6)).